The primary structure comprises 623 residues: E3 ubiquitin-protein ligase DTX1 (623 aa).

WWE domains lie at 13 to 93 (HNFG…PVRR) and 94 to 170 (NFFE…RLRR). The disordered stretch occupies residues 224 to 319 (KVPSGPPPAL…RASIPPGVPA (96 aa)). Residues 227-242 (SGPPPALPPPPPPPIH) show a composition bias toward pro residues. A compositionally biased stretch (polar residues) spans 292–311 (GQNNLNRPGEQRTSGSSSRA). The RING-type zinc-finger motif lies at 413–474 (CTICMERLVT…DGSLQCPTCK (62 aa)).

It belongs to the Deltex family. In terms of assembly, may form a homo- or heterodimer with other members of the Deltex family. Probably interacts with Notch1. Specifically expressed in regions undergoing neuronal differentiation. Mainly colocalizes with Notch1.

It carries out the reaction S-ubiquitinyl-[E2 ubiquitin-conjugating enzyme]-L-cysteine + [acceptor protein]-L-lysine = [E2 ubiquitin-conjugating enzyme]-L-cysteine + N(6)-ubiquitinyl-[acceptor protein]-L-lysine.. It functions in the pathway protein modification; protein ubiquitination. Regulator of Notch signaling, a signaling pathway involved in cell-cell communications that regulates a broad spectrum of cell-fate determinations. Probably acts both as a positive and negative regulator of Notch, depending on the developmental and cell context. Functions as a ubiquitin ligase protein in vivo, mediating ubiquitination and promoting degradation of MEKK1, suggesting that it may regulate the Notch pathway via some ubiquitin ligase activity. In Xenopus laevis (African clawed frog), this protein is E3 ubiquitin-protein ligase DTX1 (dtx1).